Here is a 154-residue protein sequence, read N- to C-terminus: UPF0178 protein Sala_2376 (154 aa).

This sequence belongs to the UPF0178 family.

The chain is UPF0178 protein Sala_2376 from Sphingopyxis alaskensis (strain DSM 13593 / LMG 18877 / RB2256) (Sphingomonas alaskensis).